Reading from the N-terminus, the 445-residue chain is N-succinylarginine dihydrolase (445 aa).

Residues 19-28, Asn-110, and 137-138 contribute to the substrate site; these read AGLSYGNVAS and HR. Residue Glu-174 is part of the active site. Arg-214 contributes to the substrate binding site. His-250 is an active-site residue. The substrate site is built by Asp-252 and Asn-363. Cys-369 (nucleophile) is an active-site residue.

The protein belongs to the succinylarginine dihydrolase family. As to quaternary structure, homodimer.

The enzyme catalyses N(2)-succinyl-L-arginine + 2 H2O + 2 H(+) = N(2)-succinyl-L-ornithine + 2 NH4(+) + CO2. The protein operates within amino-acid degradation; L-arginine degradation via AST pathway; L-glutamate and succinate from L-arginine: step 2/5. In terms of biological role, catalyzes the hydrolysis of N(2)-succinylarginine into N(2)-succinylornithine, ammonia and CO(2). This Aeromonas hydrophila subsp. hydrophila (strain ATCC 7966 / DSM 30187 / BCRC 13018 / CCUG 14551 / JCM 1027 / KCTC 2358 / NCIMB 9240 / NCTC 8049) protein is N-succinylarginine dihydrolase.